A 262-amino-acid chain; its full sequence is Nodulation protein J (262 aa).

Residues Ala33 to Arg259 enclose the ABC transmembrane type-2 domain. 7 helical membrane-spanning segments follow: residues Ile35–Met55, Gly62–Ser82, Ala102–Ala122, Leu127–Leu147, Leu148–Val168, Tyr177–Phe197, and Leu231–Leu251.

It belongs to the ABC-2 integral membrane protein family. Lipooligosaccharide exporter (TC 3.A.1.102) subfamily. As to quaternary structure, the complex is composed of two ATP-binding proteins (NodI) and two transmembrane proteins (NodJ).

Its subcellular location is the cell inner membrane. Functionally, part of the ABC transporter complex NodIJ involved in the export of the nodulation factors (Nod factors), the bacterial signal molecules that induce symbiosis and subsequent nodulation induction. Nod factors are LCO (lipo-chitin oligosaccharide), a modified beta-1,4-linked N-acetylglucosamine oligosaccharide. This subunit encodes the transporter. The sequence is that of Nodulation protein J (nodJ) from Rhizobium meliloti (strain 1021) (Ensifer meliloti).